We begin with the raw amino-acid sequence, 686 residues long: Forkhead box protein P1 (686 aa).

2 stretches are compositionally biased toward polar residues: residues 1 to 19 and 279 to 292; these read MMQESGTETKSNGSAIQNG and IINPHASTNGQLSV. 2 disordered regions span residues 1–23 and 279–306; these read MMQESGTETKSNGSAIQNGASGG and IINPHASTNGQLSVHTPKRESLSHEEHS. Residues 295-306 show a composition bias toward basic and acidic residues; that stretch reads PKRESLSHEEHS. The C2H2-type zinc finger occupies 315 to 340; the sequence is GVCKWPGCEAVCEDFQSFLKHLNSEH. The leucine-zipper stretch occupies residues 357–378; that stretch reads VQQLELQLAKDKERLQAMMTHL. The interval 391–395 is CTBP1-binding; sequence PLNLV. Residues 403-412 show a composition bias toward polar residues; sequence TASEASPQSL. The tract at residues 403–440 is disordered; that stretch reads TASEASPQSLPHTPTTPTAPITPVTQGPSVITTTSMHN. Positions 413-427 are enriched in low complexity; that stretch reads PHTPTTPTAPITPVT. Over residues 428–439 the composition is skewed to polar residues; the sequence is QGPSVITTTSMH. Residues 474 to 564 constitute a DNA-binding region (fork-head); sequence RPPFTYASLI…PQKISGNPSL (91 aa). The tract at residues 619 to 686 is disordered; that stretch reads MEHTNSNGSD…EDEPVNEDIE (68 aa). The span at 621–632 shows a compositional bias: polar residues; sequence HTNSNGSDSSPG. Acidic residues predominate over residues 676–686; sequence YEDEPVNEDIE.

The protein localises to the nucleus. In terms of biological role, transcriptional repressor. The chain is Forkhead box protein P1 (FOXP1) from Gallus gallus (Chicken).